The primary structure comprises 101 residues: Acylphosphatase-1 (101 aa).

N-acetylserine is present on Ser-2. N-acetylalanine is present on Ser-2. Residues Ser-11–Lys-101 form the Acylphosphatase-like domain. Catalysis depends on residues Arg-26 and Asn-44.

Belongs to the acylphosphatase family. As to expression, organ-common type isozyme is found in many different tissues.

The catalysed reaction is an acyl phosphate + H2O = a carboxylate + phosphate + H(+). This Bos taurus (Bovine) protein is Acylphosphatase-1 (ACYP1).